The sequence spans 462 residues: ATP synthase subunit beta (462 aa).

Residue 152–159 (GGAGVGKT) participates in ATP binding.

Belongs to the ATPase alpha/beta chains family. As to quaternary structure, F-type ATPases have 2 components, CF(1) - the catalytic core - and CF(0) - the membrane proton channel. CF(1) has five subunits: alpha(3), beta(3), gamma(1), delta(1), epsilon(1). CF(0) has three main subunits: a(1), b(2) and c(9-12). The alpha and beta chains form an alternating ring which encloses part of the gamma chain. CF(1) is attached to CF(0) by a central stalk formed by the gamma and epsilon chains, while a peripheral stalk is formed by the delta and b chains.

It is found in the cell inner membrane. The catalysed reaction is ATP + H2O + 4 H(+)(in) = ADP + phosphate + 5 H(+)(out). Its function is as follows. Produces ATP from ADP in the presence of a proton gradient across the membrane. The catalytic sites are hosted primarily by the beta subunits. The sequence is that of ATP synthase subunit beta from Shewanella amazonensis (strain ATCC BAA-1098 / SB2B).